We begin with the raw amino-acid sequence, 118 residues long: RxLR effector protein PITG_19617 (118 aa).

The signal sequence occupies residues 1 to 21 (MRAVYILAMACAATLQASSSA). The RxLR-dEER motif lies at 50–64 (RLLRVEDKEEETEEE).

It belongs to the RxLR effector family.

It is found in the secreted. It localises to the host nucleus. The protein localises to the host cytoplasm. Effector that enhances P.infestans colonization of Nicotiana benthamiana leaves. In Phytophthora infestans (strain T30-4) (Potato late blight agent), this protein is RxLR effector protein PITG_19617.